We begin with the raw amino-acid sequence, 332 residues long: Holliday junction branch migration complex subunit RuvB (332 aa).

The segment at methionine 1–tyrosine 181 is large ATPase domain (RuvB-L). ATP contacts are provided by residues leucine 20, arginine 21, glycine 62, lysine 65, threonine 66, threonine 67, glutamate 128–phenylalanine 130, arginine 171, tyrosine 181, and arginine 218. Position 66 (threonine 66) interacts with Mg(2+). The tract at residues alanine 182 to aspartate 252 is small ATPAse domain (RuvB-S). The head domain (RuvB-H) stretch occupies residues histidine 255–lysine 332. Residues arginine 291, arginine 310, arginine 312, and arginine 315 each coordinate DNA.

Belongs to the RuvB family. As to quaternary structure, homohexamer. Forms an RuvA(8)-RuvB(12)-Holliday junction (HJ) complex. HJ DNA is sandwiched between 2 RuvA tetramers; dsDNA enters through RuvA and exits via RuvB. An RuvB hexamer assembles on each DNA strand where it exits the tetramer. Each RuvB hexamer is contacted by two RuvA subunits (via domain III) on 2 adjacent RuvB subunits; this complex drives branch migration. In the full resolvosome a probable DNA-RuvA(4)-RuvB(12)-RuvC(2) complex forms which resolves the HJ.

It is found in the cytoplasm. The enzyme catalyses ATP + H2O = ADP + phosphate + H(+). In terms of biological role, the RuvA-RuvB-RuvC complex processes Holliday junction (HJ) DNA during genetic recombination and DNA repair, while the RuvA-RuvB complex plays an important role in the rescue of blocked DNA replication forks via replication fork reversal (RFR). RuvA specifically binds to HJ cruciform DNA, conferring on it an open structure. The RuvB hexamer acts as an ATP-dependent pump, pulling dsDNA into and through the RuvAB complex. RuvB forms 2 homohexamers on either side of HJ DNA bound by 1 or 2 RuvA tetramers; 4 subunits per hexamer contact DNA at a time. Coordinated motions by a converter formed by DNA-disengaged RuvB subunits stimulates ATP hydrolysis and nucleotide exchange. Immobilization of the converter enables RuvB to convert the ATP-contained energy into a lever motion, pulling 2 nucleotides of DNA out of the RuvA tetramer per ATP hydrolyzed, thus driving DNA branch migration. The RuvB motors rotate together with the DNA substrate, which together with the progressing nucleotide cycle form the mechanistic basis for DNA recombination by continuous HJ branch migration. Branch migration allows RuvC to scan DNA until it finds its consensus sequence, where it cleaves and resolves cruciform DNA. This Streptococcus pneumoniae serotype 19F (strain G54) protein is Holliday junction branch migration complex subunit RuvB.